Reading from the N-terminus, the 447-residue chain is Phosphoglucosamine mutase (447 aa).

Ser101 functions as the Phosphoserine intermediate in the catalytic mechanism. Mg(2+) is bound by residues Ser101, Asp242, Asp244, and Asp246. Ser101 carries the phosphoserine modification.

This sequence belongs to the phosphohexose mutase family. Mg(2+) serves as cofactor. In terms of processing, activated by phosphorylation.

It carries out the reaction alpha-D-glucosamine 1-phosphate = D-glucosamine 6-phosphate. Catalyzes the conversion of glucosamine-6-phosphate to glucosamine-1-phosphate. This Xanthobacter autotrophicus (strain ATCC BAA-1158 / Py2) protein is Phosphoglucosamine mutase.